We begin with the raw amino-acid sequence, 179 residues long: ATP synthase subunit b (179 aa).

A helical membrane pass occupies residues 27–47 (TAITFLVMLAVLAKFAWGPIV).

It belongs to the ATPase B chain family. As to quaternary structure, F-type ATPases have 2 components, F(1) - the catalytic core - and F(0) - the membrane proton channel. F(1) has five subunits: alpha(3), beta(3), gamma(1), delta(1), epsilon(1). F(0) has three main subunits: a(1), b(2) and c(10-14). The alpha and beta chains form an alternating ring which encloses part of the gamma chain. F(1) is attached to F(0) by a central stalk formed by the gamma and epsilon chains, while a peripheral stalk is formed by the delta and b chains.

It localises to the cell inner membrane. In terms of biological role, f(1)F(0) ATP synthase produces ATP from ADP in the presence of a proton or sodium gradient. F-type ATPases consist of two structural domains, F(1) containing the extramembraneous catalytic core and F(0) containing the membrane proton channel, linked together by a central stalk and a peripheral stalk. During catalysis, ATP synthesis in the catalytic domain of F(1) is coupled via a rotary mechanism of the central stalk subunits to proton translocation. Its function is as follows. Component of the F(0) channel, it forms part of the peripheral stalk, linking F(1) to F(0). This chain is ATP synthase subunit b, found in Anaeromyxobacter dehalogenans (strain 2CP-C).